Here is a 313-residue protein sequence, read N- to C-terminus: Beta-ketoacyl-[acyl-carrier-protein] synthase III (313 aa).

Residues Cys112 and His238 contribute to the active site. Positions 239 to 243 are ACP-binding; sequence QANIR. The active site involves Asn268.

Belongs to the thiolase-like superfamily. FabH family. As to quaternary structure, homodimer.

It is found in the cytoplasm. It carries out the reaction malonyl-[ACP] + acetyl-CoA + H(+) = 3-oxobutanoyl-[ACP] + CO2 + CoA. Its pathway is lipid metabolism; fatty acid biosynthesis. Its function is as follows. Catalyzes the condensation reaction of fatty acid synthesis by the addition to an acyl acceptor of two carbons from malonyl-ACP. Catalyzes the first condensation reaction which initiates fatty acid synthesis and may therefore play a role in governing the total rate of fatty acid production. Possesses both acetoacetyl-ACP synthase and acetyl transacylase activities. Its substrate specificity determines the biosynthesis of branched-chain and/or straight-chain of fatty acids. This chain is Beta-ketoacyl-[acyl-carrier-protein] synthase III, found in Staphylococcus haemolyticus (strain JCSC1435).